We begin with the raw amino-acid sequence, 689 residues long: Glycine--tRNA ligase beta subunit (689 aa).

The protein belongs to the class-II aminoacyl-tRNA synthetase family. Tetramer of two alpha and two beta subunits.

The protein localises to the cytoplasm. The catalysed reaction is tRNA(Gly) + glycine + ATP = glycyl-tRNA(Gly) + AMP + diphosphate. In Coxiella burnetii (strain Dugway 5J108-111), this protein is Glycine--tRNA ligase beta subunit.